The chain runs to 476 residues: Aspartyl/glutamyl-tRNA(Asn/Gln) amidotransferase subunit B (476 aa).

It belongs to the GatB/GatE family. GatB subfamily. As to quaternary structure, heterotrimer of A, B and C subunits.

It carries out the reaction L-glutamyl-tRNA(Gln) + L-glutamine + ATP + H2O = L-glutaminyl-tRNA(Gln) + L-glutamate + ADP + phosphate + H(+). The enzyme catalyses L-aspartyl-tRNA(Asn) + L-glutamine + ATP + H2O = L-asparaginyl-tRNA(Asn) + L-glutamate + ADP + phosphate + 2 H(+). Allows the formation of correctly charged Asn-tRNA(Asn) or Gln-tRNA(Gln) through the transamidation of misacylated Asp-tRNA(Asn) or Glu-tRNA(Gln) in organisms which lack either or both of asparaginyl-tRNA or glutaminyl-tRNA synthetases. The reaction takes place in the presence of glutamine and ATP through an activated phospho-Asp-tRNA(Asn) or phospho-Glu-tRNA(Gln). The chain is Aspartyl/glutamyl-tRNA(Asn/Gln) amidotransferase subunit B from Enterococcus faecalis (strain ATCC 700802 / V583).